Reading from the N-terminus, the 160-residue chain is Transcription elongation factor GreA (160 aa).

Positions 49 to 75 form a coiled coil; it reads SEYDEAKNDQAFTEGKILQLENKLKNA.

Belongs to the GreA/GreB family.

Necessary for efficient RNA polymerase transcription elongation past template-encoded arresting sites. The arresting sites in DNA have the property of trapping a certain fraction of elongating RNA polymerases that pass through, resulting in locked ternary complexes. Cleavage of the nascent transcript by cleavage factors such as GreA or GreB allows the resumption of elongation from the new 3'terminus. GreA releases sequences of 2 to 3 nucleotides. This chain is Transcription elongation factor GreA, found in Clostridium botulinum (strain Eklund 17B / Type B).